The following is a 396-amino-acid chain: S-adenosylmethionine synthase (396 aa).

H14 lines the ATP pocket. D16 contacts Mg(2+). E42 provides a ligand contact to K(+). L-methionine contacts are provided by E55 and Q98. Residues 98 to 108 form a flexible loop region; the sequence is QSPDIALGVNK. ATP contacts are provided by residues 174-176, 241-242, D250, 256-257, A273, and K277; these read DGK, RF, and RK. Residue D250 coordinates L-methionine. K281 contacts L-methionine.

It belongs to the AdoMet synthase family. Homotetramer; dimer of dimers. It depends on Mg(2+) as a cofactor. K(+) serves as cofactor.

Its subcellular location is the cytoplasm. The enzyme catalyses L-methionine + ATP + H2O = S-adenosyl-L-methionine + phosphate + diphosphate. It participates in amino-acid biosynthesis; S-adenosyl-L-methionine biosynthesis; S-adenosyl-L-methionine from L-methionine: step 1/1. Its function is as follows. Catalyzes the formation of S-adenosylmethionine (AdoMet) from methionine and ATP. The overall synthetic reaction is composed of two sequential steps, AdoMet formation and the subsequent tripolyphosphate hydrolysis which occurs prior to release of AdoMet from the enzyme. The sequence is that of S-adenosylmethionine synthase from Pseudothermotoga lettingae (strain ATCC BAA-301 / DSM 14385 / NBRC 107922 / TMO) (Thermotoga lettingae).